Here is a 64-residue protein sequence, read N- to C-terminus: DNA gyrase inhibitor YacG (64 aa).

Residues cysteine 9, cysteine 12, cysteine 28, and cysteine 32 each contribute to the Zn(2+) site. Positions 42–64 are disordered; it reads DEENAIPGAPDMSDSDGWSEEQY. The segment covering 54–64 has biased composition (acidic residues); it reads SDSDGWSEEQY.

Belongs to the DNA gyrase inhibitor YacG family. As to quaternary structure, interacts with GyrB. Zn(2+) is required as a cofactor.

In terms of biological role, inhibits all the catalytic activities of DNA gyrase by preventing its interaction with DNA. Acts by binding directly to the C-terminal domain of GyrB, which probably disrupts DNA binding by the gyrase. This chain is DNA gyrase inhibitor YacG, found in Vibrio vulnificus (strain CMCP6).